The primary structure comprises 685 residues: DNA-directed RNA polymerase subunit beta' (685 aa).

The Zn(2+) site is built by C69, C71, C87, and C90. Positions 489, 491, and 493 each coordinate Mg(2+).

This sequence belongs to the RNA polymerase beta' chain family. RpoC1 subfamily. As to quaternary structure, in plastids the minimal PEP RNA polymerase catalytic core is composed of four subunits: alpha, beta, beta', and beta''. When a (nuclear-encoded) sigma factor is associated with the core the holoenzyme is formed, which can initiate transcription. Requires Mg(2+) as cofactor. Zn(2+) serves as cofactor.

The protein localises to the plastid. The protein resides in the chloroplast. It carries out the reaction RNA(n) + a ribonucleoside 5'-triphosphate = RNA(n+1) + diphosphate. In terms of biological role, DNA-dependent RNA polymerase catalyzes the transcription of DNA into RNA using the four ribonucleoside triphosphates as substrates. The sequence is that of DNA-directed RNA polymerase subunit beta' from Gossypium hirsutum (Upland cotton).